The primary structure comprises 287 residues: Uroplakin-3a (287 aa).

The N-terminal stretch at methionine 1–alanine 18 is a signal peptide. Topologically, residues valine 19–glycine 207 are lumenal. Residues asparagine 74, asparagine 139, and asparagine 170 are each glycosylated (N-linked (GlcNAc...) asparagine). The chain crosses the membrane as a helical span at residues methionine 208–valine 235. The Cytoplasmic portion of the chain corresponds to aspartate 236 to aspartate 287. Residues glycine 242–aspartate 287 form a disordered region. The segment covering alanine 261–asparagine 270 has biased composition (polar residues).

The protein belongs to the uroplakin-3 family. Heterodimer with uroplakin-1B (UPK1B). Expressed in ureter.

The protein resides in the endoplasmic reticulum membrane. In terms of biological role, component of the asymmetric unit membrane (AUM); a highly specialized biomembrane elaborated by terminally differentiated urothelial cells. May play an important role in AUM-cytoskeleton interaction in terminally differentiated urothelial cells. It also contributes to the formation of urothelial glycocalyx which may play an important role in preventing bacterial adherence. In Homo sapiens (Human), this protein is Uroplakin-3a (UPK3A).